Here is a 624-residue protein sequence, read N- to C-terminus: Protein NRT1/ PTR FAMILY 6.1 (624 aa).

Residues 1 to 20 are disordered; sequence MVASEIKSPVSVPETPGSSS. 2 consecutive transmembrane segments (helical) span residues 83–100 and 114–134; these read MAYF…FYVM and FLGI…AYLG. Threonine 138 carries the phosphothreonine modification. A run of 10 helical transmembrane segments spans residues 139-159, 184-204, 230-250, 258-278, 378-398, 422-442, 459-479, 504-524, 537-557, and 585-605; these read IAIF…GASL, SWQM…AAGI, FFNF…TLVV, WGMA…LFFA, LIPI…YLTL, VFPG…FVPI, VGIG…FENY, WLLI…VGLL, SIGS…ATIL, and CLYW…LWSA.

It belongs to the major facilitator superfamily. Proton-dependent oligopeptide transporter (POT/PTR) (TC 2.A.17) family. As to expression, expressed in flower and siliques.

The protein localises to the membrane. This chain is Protein NRT1/ PTR FAMILY 6.1 (NPF6.1), found in Arabidopsis thaliana (Mouse-ear cress).